We begin with the raw amino-acid sequence, 102 residues long: Acid shock protein (102 aa).

Positions 1 to 21 are cleaved as a signal peptide; the sequence is MKKVLGLVVAAAMGLSSAAFA. A compositionally biased stretch (low complexity) spans 22 to 41; that stretch reads AETATTPAPTATTTKAAPAK. Residues 22–58 constitute a propeptide that is removed on maturation; sequence AETATTPAPTATTTKAAPAKTTHHKKQHKAAPAQKAQ. The interval 22–102 is disordered; the sequence is AETATTPAPT…PAKPAAQPAA (81 aa). Basic residues predominate over residues 80–90; that stretch reads AAKKHAGKHSH. Over residues 91-102 the composition is skewed to low complexity; that stretch reads QQPAKPAAQPAA.

This sequence belongs to the Asr family. Proteolytic processing gives rise to the active protein.

It is found in the periplasm. Its function is as follows. Required for growth and/or survival at acidic conditions. The chain is Acid shock protein from Escherichia coli (strain SE11).